The sequence spans 419 residues: 4-hydroxyphenylpyruvate dioxygenase (419 aa).

VOC domains are found at residues 41–187 and 218–376; these read GYHH…FIQR and AIDH…LFTK. Residues His-221, His-304, and Glu-387 each coordinate Fe cation.

The protein belongs to the 4HPPD family. It depends on Fe cation as a cofactor.

The enzyme catalyses 3-(4-hydroxyphenyl)pyruvate + O2 = homogentisate + CO2. It participates in amino-acid degradation; L-phenylalanine degradation; acetoacetate and fumarate from L-phenylalanine: step 3/6. The polypeptide is 4-hydroxyphenylpyruvate dioxygenase (HPPD) (Zymoseptoria tritici (Speckled leaf blotch fungus)).